Here is a 435-residue protein sequence, read N- to C-terminus: T-cell defective protein 2 (435 aa).

Residues 65–146 (NASTSFQSQP…KTPDSLRKSI (82 aa)) form a disordered region. Residues 322 to 352 (TKISAKKEKEQKKSAAKEAALKEAKEKEMRI) are a coiled coil. The segment at 393–419 (FFKANPPPAPRAPQAPELASGPRRIPT) is disordered.

Strongly expressed in the cytoplasm of the pharynx muscle cells and several head neurons, probably the IL1s or IL2s, throughout development. Also expressed in some other unidentified neurons in the tail region. Weakly expressed in the nuclei of the T-cells and the T-cell daughters. Not expressed in gonads and in P12 cell.

The protein localises to the nucleus. It localises to the cytoplasm. Its function is as follows. May act synergistically with the Wnt pathways to control T-cell fate specification, gonad development, and P12 cell fate specification. Required for the distribution of pop-1 and tlp-1 proteins. The polypeptide is T-cell defective protein 2 (tcl-2) (Caenorhabditis elegans).